The primary structure comprises 274 residues: Large ribosomal subunit protein uL2cz/uL2cy (274 aa).

Disordered stretches follow at residues methionine 1–proline 26 and methionine 223–lysine 274.

The protein belongs to the universal ribosomal protein uL2 family. Part of the 50S ribosomal subunit.

The protein localises to the plastid. Its subcellular location is the chloroplast. The chain is Large ribosomal subunit protein uL2cz/uL2cy (rpl2-A) from Daucus carota (Wild carrot).